We begin with the raw amino-acid sequence, 1486 residues long: Chromosome partition protein MukB (1486 aa).

Residue 34–41 (GGNGAGKS) coordinates ATP. Coiled coils occupy residues 326-418 (LEAD…QYNQ), 444-480 (LETFQAKELEATEKMLSLEQKMSMAQTAHSQFEQAYQ), and 509-603 (RHLA…RAPV). The interval 666–783 (PGGSEDQRLN…EVPLFGRAAR (118 aa)) is flexible hinge. 3 coiled-coil regions span residues 835–923 (EAEI…AKLE), 977–1115 (EMLS…TAKA), and 1209–1266 (VEAI…QNVS).

It belongs to the SMC family. MukB subfamily. As to quaternary structure, homodimerization via its hinge domain. Binds to DNA via its C-terminal region. Interacts, and probably forms a ternary complex, with MukE and MukF via its C-terminal region. The complex formation is stimulated by calcium or magnesium. Interacts with tubulin-related protein FtsZ.

The protein resides in the cytoplasm. It is found in the nucleoid. Plays a central role in chromosome condensation, segregation and cell cycle progression. Functions as a homodimer, which is essential for chromosome partition. Involved in negative DNA supercoiling in vivo, and by this means organize and compact chromosomes. May achieve or facilitate chromosome segregation by condensation DNA from both sides of a centrally located replisome during cell division. This chain is Chromosome partition protein MukB, found in Escherichia fergusonii (strain ATCC 35469 / DSM 13698 / CCUG 18766 / IAM 14443 / JCM 21226 / LMG 7866 / NBRC 102419 / NCTC 12128 / CDC 0568-73).